A 369-amino-acid chain; its full sequence is 2-aminoethylphosphonate--pyruvate transaminase 1 (369 aa).

An N6-(pyridoxal phosphate)lysine modification is found at Lys191.

Belongs to the class-V pyridoxal-phosphate-dependent aminotransferase family. PhnW subfamily. As to quaternary structure, homodimer. Pyridoxal 5'-phosphate serves as cofactor.

The catalysed reaction is (2-aminoethyl)phosphonate + pyruvate = phosphonoacetaldehyde + L-alanine. Involved in phosphonate degradation. In Burkholderia lata (strain ATCC 17760 / DSM 23089 / LMG 22485 / NCIMB 9086 / R18194 / 383), this protein is 2-aminoethylphosphonate--pyruvate transaminase 1.